A 466-amino-acid chain; its full sequence is Methylenetetrahydrofolate--tRNA-(uracil-5-)-methyltransferase TrmFO (466 aa).

14-19 (GGGLAG) is a binding site for FAD.

This sequence belongs to the MnmG family. TrmFO subfamily. It depends on FAD as a cofactor.

The protein resides in the cytoplasm. It carries out the reaction uridine(54) in tRNA + (6R)-5,10-methylene-5,6,7,8-tetrahydrofolate + NADH + H(+) = 5-methyluridine(54) in tRNA + (6S)-5,6,7,8-tetrahydrofolate + NAD(+). It catalyses the reaction uridine(54) in tRNA + (6R)-5,10-methylene-5,6,7,8-tetrahydrofolate + NADPH + H(+) = 5-methyluridine(54) in tRNA + (6S)-5,6,7,8-tetrahydrofolate + NADP(+). In terms of biological role, catalyzes the folate-dependent formation of 5-methyl-uridine at position 54 (M-5-U54) in all tRNAs. The polypeptide is Methylenetetrahydrofolate--tRNA-(uracil-5-)-methyltransferase TrmFO (Brucella abortus (strain 2308)).